We begin with the raw amino-acid sequence, 190 residues long: Guanylate kinase (190 aa).

Residues 8–188 form the Guanylate kinase-like domain; the sequence is GRLVILAGPS…AVSAIKAVLL (181 aa). 15–22 serves as a coordination point for ATP; that stretch reads GPSAVGKS.

Belongs to the guanylate kinase family.

Its subcellular location is the cytoplasm. It carries out the reaction GMP + ATP = GDP + ADP. In terms of biological role, essential for recycling GMP and indirectly, cGMP. The protein is Guanylate kinase of Corynebacterium efficiens (strain DSM 44549 / YS-314 / AJ 12310 / JCM 11189 / NBRC 100395).